A 245-amino-acid polypeptide reads, in one-letter code: tRNA pseudouridine synthase A (245 aa).

Aspartate 52 serves as the catalytic Nucleophile. Tyrosine 111 provides a ligand contact to substrate.

This sequence belongs to the tRNA pseudouridine synthase TruA family. In terms of assembly, homodimer.

The catalysed reaction is uridine(38/39/40) in tRNA = pseudouridine(38/39/40) in tRNA. In terms of biological role, formation of pseudouridine at positions 38, 39 and 40 in the anticodon stem and loop of transfer RNAs. This Rickettsia canadensis (strain McKiel) protein is tRNA pseudouridine synthase A.